Here is a 409-residue protein sequence, read N- to C-terminus: Glutamyl-tRNA(Gln) amidotransferase subunit D (409 aa).

The Asparaginase/glutaminase domain occupies 68-390; sequence RKISVLATGG…DLFRDLFRKN (323 aa). Residues Thr78, Thr152, Asp153, and Lys230 contribute to the active site.

Belongs to the asparaginase 1 family. GatD subfamily. Heterodimer of GatD and GatE.

The enzyme catalyses L-glutamyl-tRNA(Gln) + L-glutamine + ATP + H2O = L-glutaminyl-tRNA(Gln) + L-glutamate + ADP + phosphate + H(+). Its function is as follows. Allows the formation of correctly charged Gln-tRNA(Gln) through the transamidation of misacylated Glu-tRNA(Gln) in organisms which lack glutaminyl-tRNA synthetase. The reaction takes place in the presence of glutamine and ATP through an activated gamma-phospho-Glu-tRNA(Gln). The GatDE system is specific for glutamate and does not act on aspartate. In Thermoplasma acidophilum (strain ATCC 25905 / DSM 1728 / JCM 9062 / NBRC 15155 / AMRC-C165), this protein is Glutamyl-tRNA(Gln) amidotransferase subunit D.